Consider the following 618-residue polypeptide: 1-deoxy-D-xylulose-5-phosphate synthase (618 aa).

Residues H70 and 111–113 (GHS) each bind thiamine diphosphate. D142 is a binding site for Mg(2+). Residues 143 to 144 (GS), N171, Y278, and E360 contribute to the thiamine diphosphate site. Residue N171 coordinates Mg(2+).

Belongs to the transketolase family. DXPS subfamily. In terms of assembly, homodimer. The cofactor is Mg(2+). Requires thiamine diphosphate as cofactor.

The catalysed reaction is D-glyceraldehyde 3-phosphate + pyruvate + H(+) = 1-deoxy-D-xylulose 5-phosphate + CO2. The protein operates within metabolic intermediate biosynthesis; 1-deoxy-D-xylulose 5-phosphate biosynthesis; 1-deoxy-D-xylulose 5-phosphate from D-glyceraldehyde 3-phosphate and pyruvate: step 1/1. Functionally, catalyzes the acyloin condensation reaction between C atoms 2 and 3 of pyruvate and glyceraldehyde 3-phosphate to yield 1-deoxy-D-xylulose-5-phosphate (DXP). The chain is 1-deoxy-D-xylulose-5-phosphate synthase from Helicobacter pylori (strain G27).